A 1747-amino-acid polypeptide reads, in one-letter code: E3 ubiquitin-protein ligase listerin (1747 aa).

The interval 1 to 24 (MGGKTKQAPRTKNNAKPSSSSRTA) is disordered. The span at 8–24 (APRTKNNAKPSSSSRTA) shows a compositional bias: polar residues. HEAT repeat units follow at residues 65-102 (AAISPQTQIILRKLSKKDPMTKKKALQELHELIEQSDV), 106-144 (KNILPLWPKYYLNLASDPEHTVREQTQTVLQLLMAKCKK), 346-383 (NIRKTLLPKLSSLLQNGFNRNAQAICPNLLPFLSKVTQ), 424-461 (NAYFECLRFLMQQINNNKQREQKEEEFSFSLLDNNVLE), and 508-547 (KFWIRIFELVTQDLSAEEVNEQLLGHVLLLVQDLHMANPS). Residue serine 566 is modified to Phosphoserine. HEAT repeat units lie at residues 612 to 653 (SRYI…LLGQ), 664 to 711 (EIVF…CAEA), 789 to 825 (SFIAQIMPVICSNNNSSLHVRQHIFLKLFKFSLEHRP), 952 to 989 (LSRNEILPLLQRSTLNFSTIYKLVYQFPPPQDTNDPED), 1005 to 1042 (KWNEPLIAELLQCIRVAGTAECWLEMSVLQSSTEELVL), 1053 to 1090 (GNSSDLVAIVKERLQQAAVQQSSVIDCRLLSYLRFCPQ), 1129 to 1166 (KLSQKAITLSSAIMGTEPPEIWVKAAVFHALLLNNFEG), 1216 to 1258 (VEFI…SIAQ), 1269 to 1307 (VAVYELFAALIDFIRSEKQKSSTELLKNMIDEWDSLFAK), 1330 to 1363 (FQACYEALLEQITPVIERLDYSFVYSFCKSNSNI), 1364 to 1400 (TLDHLCNFLFKQLYSVQHSVRLSAVHSLRQLTPHFVA), and 1500 to 1539 (ENFLHFLFRAMPVDILKNHGAKVHSNGVYKELTWSQQKDR). The RING-type zinc finger occupies 1697 to 1744 (CYVCYTVIHQETCQLPKLTCKTCKKKFHGPCLYKWFTTSSKSTCPICR).

It belongs to the LTN1 family. Component of the ribosome quality control complex (RQC), composed of at least the E3 ubiquitin ligase l(3)76BDr/LTN1 and Clbn/NEMF. The complex probably also contains TCF25 as well as TER94/VCP and its ubiquitin-binding cofactors. RQC forms a stable complex with 60S ribosomal subunits.

It is found in the cytoplasm. Its subcellular location is the cytosol. It catalyses the reaction S-ubiquitinyl-[E2 ubiquitin-conjugating enzyme]-L-cysteine + [acceptor protein]-L-lysine = [E2 ubiquitin-conjugating enzyme]-L-cysteine + N(6)-ubiquitinyl-[acceptor protein]-L-lysine.. The protein operates within protein modification; protein ubiquitination. E3 ubiquitin-protein ligase component of the ribosome quality control complex (RQC), a ribosome-associated complex that mediates ubiquitination and extraction of incompletely synthesized nascent chains for proteasomal degradation. Ubiquitination leads to TER94/VCP recruitment for extraction and degradation of the incomplete translation product. The chain is E3 ubiquitin-protein ligase listerin from Drosophila melanogaster (Fruit fly).